A 2293-amino-acid chain; its full sequence is Protein Ycf2 A (2293 aa).

An ATP-binding site is contributed by 1647–1654; sequence GSIGTGRS.

It belongs to the Ycf2 family.

Its subcellular location is the plastid. It localises to the chloroplast stroma. Functionally, probable ATPase of unknown function. Its presence in a non-photosynthetic plant (Epifagus virginiana) and experiments in tobacco indicate that it has an essential function which is probably not related to photosynthesis. The polypeptide is Protein Ycf2 A (Crucihimalaya wallichii (Rock-cress)).